The sequence spans 241 residues: Uridylate kinase (241 aa).

12 to 15 (KLSG) serves as a coordination point for ATP. Residues 20 to 25 (GATGYG) form an involved in allosteric activation by GTP region. Position 54 (Gly54) interacts with UMP. Residues Gly55 and Arg59 each contribute to the ATP site. Residues Asp74 and 135-142 (TGNPYMTT) each bind UMP. Residues Asn163, Tyr169, and Asp172 each coordinate ATP.

This sequence belongs to the UMP kinase family. In terms of assembly, homohexamer.

It localises to the cytoplasm. The enzyme catalyses UMP + ATP = UDP + ADP. It participates in pyrimidine metabolism; CTP biosynthesis via de novo pathway; UDP from UMP (UMPK route): step 1/1. With respect to regulation, allosterically activated by GTP. Inhibited by UTP. Catalyzes the reversible phosphorylation of UMP to UDP. In Dehalococcoides mccartyi (strain CBDB1), this protein is Uridylate kinase.